We begin with the raw amino-acid sequence, 488 residues long: MRATMARAIMLQGTGSDVGKTVLVAGLCRLAANRGLTVRPFKPQNMSNNAAVADDGGEIGRAQWLQSLAARTPSSVQMNPVLLKPQSENGSQIIVQGRVFGQAKGRDYQRLKPELLGAVLESFEKVAAGADLVIVEGAGSPAEINLRAGDIANMGFATRAGVPVVLVGDIDRGGVIASLVGTHAILEDGDRAMIAGYIINKFRGDVSLFDDGVRAIEGFTGWPCFGIVPWLRGAARLPAEDSVVLERLVRGGAGALKIAVPVLPRIANFDDLDPLRSEPDVELVFVRSGERIPADASLVVLPGSKSTISDLADFRAQGWDRDLQAHVRRGGRVIGICGGYQMLGRMVHDPLGIEGGTLETPGLGLLDIETEMAPEKTVRNSQARSTEYDAPLAGYQIHLGVTRGPDCDRPSAIIDGASDGALSADGRIMGTYLHGLFGSDAYRAGLLQSFGLSGERRNYRESVEQALDEIAGELERHLDPRWLAGLLG.

The 188-residue stretch at 255-442 folds into the GATase cobBQ-type domain; sequence ALKIAVPVLP…LHGLFGSDAY (188 aa). Catalysis depends on C337, which acts as the Nucleophile. H434 is an active-site residue.

The protein belongs to the CobB/CobQ family. CobQ subfamily.

Its pathway is cofactor biosynthesis; adenosylcobalamin biosynthesis. Functionally, catalyzes amidations at positions B, D, E, and G on adenosylcobyrinic A,C-diamide. NH(2) groups are provided by glutamine, and one molecule of ATP is hydrogenolyzed for each amidation. The protein is Cobyric acid synthase of Rhizobium johnstonii (strain DSM 114642 / LMG 32736 / 3841) (Rhizobium leguminosarum bv. viciae).